Consider the following 99-residue polypeptide: Large ribosomal subunit protein uL23 (99 aa).

It belongs to the universal ribosomal protein uL23 family. In terms of assembly, part of the 50S ribosomal subunit. Contacts protein L29, and trigger factor when it is bound to the ribosome.

In terms of biological role, one of the early assembly proteins it binds 23S rRNA. One of the proteins that surrounds the polypeptide exit tunnel on the outside of the ribosome. Forms the main docking site for trigger factor binding to the ribosome. The polypeptide is Large ribosomal subunit protein uL23 (Rhodopseudomonas palustris (strain BisB18)).